Here is a 106-residue protein sequence, read N- to C-terminus: Immunoglobulin lambda constant 7 (106 aa).

The Ig-like domain occupies 7–101; the sequence is PSVTLFPPSS…EGSTVEKTVA (95 aa). The cysteines at positions 28 and 87 are disulfide-linked.

As to quaternary structure, immunoglobulins are composed of two identical heavy chains and two identical light chains; disulfide-linked.

It is found in the secreted. Its subcellular location is the cell membrane. Functionally, constant region of immunoglobulin light chains. Immunoglobulins, also known as antibodies, are membrane-bound or secreted glycoproteins produced by B lymphocytes. In the recognition phase of humoral immunity, the membrane-bound immunoglobulins serve as receptors which, upon binding of a specific antigen, trigger the clonal expansion and differentiation of B lymphocytes into immunoglobulins-secreting plasma cells. Secreted immunoglobulins mediate the effector phase of humoral immunity, which results in the elimination of bound antigens. The antigen binding site is formed by the variable domain of one heavy chain, together with that of its associated light chain. Thus, each immunoglobulin has two antigen binding sites with remarkable affinity for a particular antigen. The variable domains are assembled by a process called V-(D)-J rearrangement and can then be subjected to somatic hypermutations which, after exposure to antigen and selection, allow affinity maturation for a particular antigen. This chain is Immunoglobulin lambda constant 7, found in Homo sapiens (Human).